A 545-amino-acid polypeptide reads, in one-letter code: Carboxylesterase 5A (545 aa).

Positions 1–28 are cleaved as a signal peptide; the sequence is MSGMWVHPGRTLIWALWVLAAVIKGPAA. N86 is a glycosylation site (N-linked (GlcNAc...) (complex) asparagine). A disulfide bridge links C94 with C121. Residue N134 is glycosylated (N-linked (GlcNAc...) asparagine). S226 serves as the catalytic Acyl-ester intermediate. C281 and C292 are disulfide-bonded. The Charge relay system role is filled by E346. Residues N363 and N443 are each glycosylated (N-linked (GlcNAc...) asparagine). H454 serves as the catalytic Charge relay system.

Belongs to the type-B carboxylesterase/lipase family. N-glycosylated; contains a fucosylated complex carbohydrate. In terms of tissue distribution, present at high level in urine. Expressed in the kidney proximal straight tubular cells and is secreted from the apical compartment of the cells into the urine (at protein level). In mature cats, it is present at higher level in intact males than in castrated males or in intact or spayed females.

It is found in the secreted. It catalyses the reaction a carboxylic ester + H2O = an alcohol + a carboxylate + H(+). Carboxylesterase present at high level in urine that regulates production of felinine, a probable pheromone precursor. Probably acts by hydrolyzing the peptide bond of the felinine precursor 3-methylbutanol cyteinylglycine, producing felinine and glycine in cat urine. The protein is Carboxylesterase 5A (CES5A) of Felis catus (Cat).